We begin with the raw amino-acid sequence, 86 residues long: Actinorhodin polyketide synthase acyl carrier protein (86 aa).

The region spanning 4–82 is the Carrier domain; sequence LLTTDDLRRA…ELLDLINGAL (79 aa). The residue at position 42 (serine 42) is an O-(pantetheine 4'-phosphoryl)serine.

Post-translationally, 4'-phosphopantetheine is transferred from CoA to a specific serine of the apo-ACP-like protein.

The protein operates within antibiotic biosynthesis; actinorhodin biosynthesis. In terms of biological role, acyl carrier protein. This is Actinorhodin polyketide synthase acyl carrier protein from Streptomyces coelicolor (strain ATCC BAA-471 / A3(2) / M145).